A 424-amino-acid polypeptide reads, in one-letter code: UDP-N-acetylglucosamine 1-carboxyvinyltransferase (424 aa).

Position 22–23 (22–23 (KN)) interacts with phosphoenolpyruvate. Arg93 serves as a coordination point for UDP-N-acetyl-alpha-D-glucosamine. Residue Cys117 is the Proton donor of the active site. The residue at position 117 (Cys117) is a 2-(S-cysteinyl)pyruvic acid O-phosphothioketal. Residues 122–126 (RPVDL), Asp307, and Ile329 contribute to the UDP-N-acetyl-alpha-D-glucosamine site.

Belongs to the EPSP synthase family. MurA subfamily.

The protein resides in the cytoplasm. It catalyses the reaction phosphoenolpyruvate + UDP-N-acetyl-alpha-D-glucosamine = UDP-N-acetyl-3-O-(1-carboxyvinyl)-alpha-D-glucosamine + phosphate. The protein operates within cell wall biogenesis; peptidoglycan biosynthesis. Its function is as follows. Cell wall formation. Adds enolpyruvyl to UDP-N-acetylglucosamine. This Chlorobaculum parvum (strain DSM 263 / NCIMB 8327) (Chlorobium vibrioforme subsp. thiosulfatophilum) protein is UDP-N-acetylglucosamine 1-carboxyvinyltransferase.